Here is a 185-residue protein sequence, read N- to C-terminus: Threonylcarbamoyl-AMP synthase (185 aa).

The YrdC-like domain maps to 4-185; it reads SFRVQQAARE…LATGEVVRPG (182 aa).

This sequence belongs to the SUA5 family. TsaC subfamily.

The protein resides in the cytoplasm. The enzyme catalyses L-threonine + hydrogencarbonate + ATP = L-threonylcarbamoyladenylate + diphosphate + H2O. Its function is as follows. Required for the formation of a threonylcarbamoyl group on adenosine at position 37 (t(6)A37) in tRNAs that read codons beginning with adenine. Catalyzes the conversion of L-threonine, HCO(3)(-)/CO(2) and ATP to give threonylcarbamoyl-AMP (TC-AMP) as the acyladenylate intermediate, with the release of diphosphate. In Pseudomonas putida (strain ATCC 47054 / DSM 6125 / CFBP 8728 / NCIMB 11950 / KT2440), this protein is Threonylcarbamoyl-AMP synthase.